Here is a 440-residue protein sequence, read N- to C-terminus: RNA polymerase II C-terminal domain phosphatase-like 4 (440 aa).

Low complexity predominate over residues 1–36; it reads MSVASDSPVHSSSSSDDLAAFLDAELDSASDASSGP. A disordered region spans residues 1–49; the sequence is MSVASDSPVHSSSSSDDLAAFLDAELDSASDASSGPSEEEEAEDDVESG. The span at 37–47 shows a compositional bias: acidic residues; the sequence is SEEEEAEDDVE. An FCP1 homology domain is found at 118–292; it reads QRQRKLYLVL…DHRYKSLSEL (175 aa). One can recognise a BRCT domain in the interval 337 to 429; that stretch reads VRKEILKGCK…MKQPEENFGL (93 aa).

In terms of assembly, interacts with RAP74. Mg(2+) serves as cofactor. Co(2+) is required as a cofactor. The cofactor is Mn(2+).

It localises to the nucleus. The enzyme catalyses O-phospho-L-seryl-[protein] + H2O = L-seryl-[protein] + phosphate. It carries out the reaction O-phospho-L-threonyl-[protein] + H2O = L-threonyl-[protein] + phosphate. Functionally, processively dephosphorylates 'Ser-2' and/or 'Ser-5' of the heptad repeats YSPTSPS in the C-terminal domain of the largest RNA polymerase II subunit (RPB1). This promotes the activity of RNA polymerase II. Required for normal plant growth. The protein is RNA polymerase II C-terminal domain phosphatase-like 4 (CPL4) of Arabidopsis thaliana (Mouse-ear cress).